Reading from the N-terminus, the 413-residue chain is E3 ubiquitin-protein ligase makorin (413 aa).

2 C3H1-type zinc fingers span residues 2 to 29 and 30 to 57; these read PRHE…HDVA and TRNE…HTRP. Positions 61-85 are disordered; sequence ELPSCSTPQTSQNQQNLQNSGQRVR. Residues 66–82 show a composition bias toward low complexity; that stretch reads STPQTSQNQQNLQNSGQ. The C3H1-type 3 zinc-finger motif lies at 138 to 167; that stretch reads QAQLMMCPYHQKSGDCNRQDMDCPFAHGNY. The RING-type zinc-finger motif lies at 213–267; that stretch reads CGICMENIFEKNLRFGILNGCQHCFCLDCIRQWRSKDQENVELATKTVRSCPECR. Residues 296-327 form a C3H1-type 4 zinc finger; it reads NTKRKICKYYSNERSRGACPFGNKCFYKHQLP.

In terms of assembly, component of a complex at least containing lep-2, lin-28 and the long non-coding RNA lep-5, which mediates the degradation of lin-28. As to expression, expressed in seam, tail tip, and other hypodermal cells, head and tail neurons, the pharynx, intestine and the developing hermaphrodite somatic gonad. Not expressed in body wall muscle cells.

It is found in the cytoplasm. It catalyses the reaction S-ubiquitinyl-[E2 ubiquitin-conjugating enzyme]-L-cysteine + [acceptor protein]-L-lysine = [E2 ubiquitin-conjugating enzyme]-L-cysteine + N(6)-ubiquitinyl-[acceptor protein]-L-lysine.. It participates in protein modification; protein ubiquitination. Functionally, E3 ubiquitin ligase which catalyzes the covalent attachment of ubiquitin moieties onto substrate proteins. Promotes the larval to adult transition by binding to the long non-coding RNA lep-5 to target the heterochronic protein lin-28 for degradation by the proteasome. This association and degradation of lin-28 also controls the timing of the sexual differentiation of individual neurons in males including the AIM, AWA, ADF, ASJ and CEM neurons. Plays a role in governing the developmental timing of male tail tip morphogenesis. Plays a role in two aspects of male mating behavior: response to hermaphrodite contact and vulva location. May play a role in the detection of preferred food sources. This Caenorhabditis elegans protein is E3 ubiquitin-protein ligase makorin.